The following is a 577-amino-acid chain: MFS-type transporter pgmG (577 aa).

The segment at 1–32 (MSETVTQTETDQRPATARSLGAEEKEAKSDEQ) is disordered. Residues 21–31 (GAEEKEAKSDE) show a composition bias toward basic and acidic residues. 8 consecutive transmembrane segments (helical) span residues 45 to 65 (FIVI…NTIV), 84 to 104 (WLSV…SKIY), 111 to 131 (WLYL…GAAP), 141 to 161 (ALAG…LSVN), 174 to 194 (TGLT…GFAV), 218 to 238 (PLTV…LFML), 259 to 279 (LGTI…NFGG), and 292 to 312 (CFVV…YCIG). Asn-317 carries N-linked (GlcNAc...) asparagine glycosylation. Residues 330–350 (FIILFVQTASVATVFFVPIYF) traverse the membrane as a helical segment. N-linked (GlcNAc...) asparagine glycosylation is present at Asn-360. 5 consecutive transmembrane segments (helical) span residues 363–383 (AIDA…AMIL), 395–415 (MPWY…MYTI), 426–446 (GYMI…FAVA), 457–477 (VATG…LAIA), and 532–552 (ISQV…LAIF).

Belongs to the major facilitator superfamily. TCR/Tet family.

It localises to the membrane. MFS-type transporter; part of the gene cluster that mediates the biosynthesis of pleosporalin A, ascomycone A, as well as a third cryptic naphthoquinone derived pigment, all responsible for the coloration of conidia. Seems not to be involved in pigment biosynthesis although its expression is regulated by the cluster-specific transcription factor pgmR. This is MFS-type transporter pgmG from Aspergillus terreus (strain NIH 2624 / FGSC A1156).